Reading from the N-terminus, the 293-residue chain is tRNA (guanine-N(7)-)-methyltransferase (293 aa).

Over residues 1 to 31 (MGGDKIKKDKRQKREDYRAAMRKDDISELPR) the composition is skewed to basic and acidic residues. Disordered regions lie at residues 1 to 33 (MGGDKIKKDKRQKREDYRAAMRKDDISELPRKK) and 68 to 97 (IVDEPTTTSPPPPPPVPEQTPSEPDLTPLR). Positions 75-85 (TSPPPPPPVPE) are enriched in pro residues. S-adenosyl-L-methionine contacts are provided by residues Gly111, 134-135 (EI), 169-170 (NT), and Cys189. Residue Asp192 is part of the active site. 267–269 (TEE) serves as a coordination point for S-adenosyl-L-methionine.

This sequence belongs to the class I-like SAM-binding methyltransferase superfamily. TrmB family. As to quaternary structure, forms a complex with TRM82.

The protein localises to the nucleus. It catalyses the reaction guanosine(46) in tRNA + S-adenosyl-L-methionine = N(7)-methylguanosine(46) in tRNA + S-adenosyl-L-homocysteine. The protein operates within tRNA modification; N(7)-methylguanine-tRNA biosynthesis. Catalyzes the formation of N(7)-methylguanine at position 46 (m7G46) in tRNA. The polypeptide is tRNA (guanine-N(7)-)-methyltransferase (Chaetomium globosum (strain ATCC 6205 / CBS 148.51 / DSM 1962 / NBRC 6347 / NRRL 1970) (Soil fungus)).